Here is a 412-residue protein sequence, read N- to C-terminus: Argininosuccinate synthase (412 aa).

10-18 (AYSGGLDTS) is an ATP binding site. Tyr89 provides a ligand contact to L-citrulline. Gly119 lines the ATP pocket. Residues Thr121, Asn125, and Asp126 each coordinate L-aspartate. Asn125 serves as a coordination point for L-citrulline. The L-citrulline site is built by Arg129, Ser177, Glu261, and Tyr273.

Belongs to the argininosuccinate synthase family. Type 1 subfamily. In terms of assembly, homotetramer.

It is found in the cytoplasm. It carries out the reaction L-citrulline + L-aspartate + ATP = 2-(N(omega)-L-arginino)succinate + AMP + diphosphate + H(+). The protein operates within amino-acid biosynthesis; L-arginine biosynthesis; L-arginine from L-ornithine and carbamoyl phosphate: step 2/3. This is Argininosuccinate synthase from Bifidobacterium longum (strain NCC 2705).